Reading from the N-terminus, the 211-residue chain is Thymidylate kinase (211 aa).

11 to 18 is a binding site for ATP; sequence GPDGAGKT.

It belongs to the thymidylate kinase family.

It carries out the reaction dTMP + ATP = dTDP + ADP. Functionally, phosphorylation of dTMP to form dTDP in both de novo and salvage pathways of dTTP synthesis. This chain is Thymidylate kinase, found in Streptococcus agalactiae serotype Ia (strain ATCC 27591 / A909 / CDC SS700).